A 381-amino-acid polypeptide reads, in one-letter code: Heterogeneous nuclear rnp K-like protein 2 (381 aa).

A disordered region spans residues 1-34 (MSQFFEAATPVAIPTNNTNGGSSDAGSAATGGAP). The segment covering 15–33 (TNNTNGGSSDAGSAATGGA) has biased composition (low complexity). 3 consecutive KH domains span residues 43–107 (TINH…IGDI), 156–221 (IGYV…LIEI), and 258–326 (NTRI…ESML). The segment at 344 to 381 (LEAAEGDATVVTERSDSASFLEEKEEPQKNHDNKEEQS) is disordered. Residues Ser-358, Ser-360, and Ser-362 each carry the phosphoserine modification. Residues 369–381 (EPQKNHDNKEEQS) are compositionally biased toward basic and acidic residues.

Belongs to the HEK2 family. As to quaternary structure, binds RNA. In terms of processing, phosphorylated by the plasma membrane-Anchored casein kinase YCK1. Phosphorylation at its C-terminus reduces its RNA-binding capacity.

It localises to the cytoplasm. The protein localises to the P-body. Its subcellular location is the nucleus. It is found in the chromosome. The protein resides in the telomere. In terms of biological role, RNA-binding protein involved in the correct localization of transcripts in the cell. RNA localization is a widespread mechanism for achieving localized protein synthesis. Required for the asymmetric localization to the daughter cell nucleus of the ASH1 transcript, coding for a specific repressor of transcription. Overexpression inhibits translation of the ASH1 transcript. Involved in the stability of transcripts, like the MTL1 mRNA. Involved in structural and functional organization of telomeric chromatin and regulates silencing at the HMR locus. This Saccharomyces cerevisiae (strain JAY291) (Baker's yeast) protein is Heterogeneous nuclear rnp K-like protein 2 (HEK2).